Reading from the N-terminus, the 269-residue chain is Formamidopyrimidine-DNA glycosylase (269 aa).

The active-site Schiff-base intermediate with DNA is Pro-2. Glu-3 functions as the Proton donor in the catalytic mechanism. Lys-57 serves as the catalytic Proton donor; for beta-elimination activity. DNA contacts are provided by His-90, Arg-109, and Lys-150. The FPG-type zinc-finger motif lies at 235–269; the sequence is QVYGRKGEPCRVCGTPIAATKHAQRATFYCRHCQK. Catalysis depends on Arg-259, which acts as the Proton donor; for delta-elimination activity.

The protein belongs to the FPG family. As to quaternary structure, monomer. The cofactor is Zn(2+).

It carries out the reaction Hydrolysis of DNA containing ring-opened 7-methylguanine residues, releasing 2,6-diamino-4-hydroxy-5-(N-methyl)formamidopyrimidine.. The catalysed reaction is 2'-deoxyribonucleotide-(2'-deoxyribose 5'-phosphate)-2'-deoxyribonucleotide-DNA = a 3'-end 2'-deoxyribonucleotide-(2,3-dehydro-2,3-deoxyribose 5'-phosphate)-DNA + a 5'-end 5'-phospho-2'-deoxyribonucleoside-DNA + H(+). Involved in base excision repair of DNA damaged by oxidation or by mutagenic agents. Acts as a DNA glycosylase that recognizes and removes damaged bases. Has a preference for oxidized purines, such as 7,8-dihydro-8-oxoguanine (8-oxoG). Has AP (apurinic/apyrimidinic) lyase activity and introduces nicks in the DNA strand. Cleaves the DNA backbone by beta-delta elimination to generate a single-strand break at the site of the removed base with both 3'- and 5'-phosphates. In Salmonella paratyphi B (strain ATCC BAA-1250 / SPB7), this protein is Formamidopyrimidine-DNA glycosylase.